The primary structure comprises 707 residues: Methionine--tRNA ligase (707 aa).

Residues Pro-13–His-23 carry the 'HIGH' region motif. Residues Cys-147, Cys-150, Cys-160, and Cys-163 each contribute to the Zn(2+) site. Positions Lys-344–Ser-348 match the 'KMSKS' region motif. Lys-347 is an ATP binding site. The 107-residue stretch at Asp-601–His-707 folds into the tRNA-binding domain.

The protein belongs to the class-I aminoacyl-tRNA synthetase family. MetG type 1 subfamily. In terms of assembly, homodimer. The cofactor is Zn(2+).

The protein resides in the cytoplasm. The catalysed reaction is tRNA(Met) + L-methionine + ATP = L-methionyl-tRNA(Met) + AMP + diphosphate. Functionally, is required not only for elongation of protein synthesis but also for the initiation of all mRNA translation through initiator tRNA(fMet) aminoacylation. The polypeptide is Methionine--tRNA ligase (Polaromonas naphthalenivorans (strain CJ2)).